The primary structure comprises 211 residues: uncharacterized protein (211 aa).

6 helical membrane passes run W21–I38, W53–V75, T82–A104, I124–V146, P159–Y178, and A188–W210.

The protein localises to the cell membrane. This is an uncharacterized protein from Archaeoglobus fulgidus (strain ATCC 49558 / DSM 4304 / JCM 9628 / NBRC 100126 / VC-16).